Here is a 318-residue protein sequence, read N- to C-terminus: GPN-loop GTPase 2 (318 aa).

29 to 34 serves as a coordination point for GTP; sequence GSGKST. The Gly-Pro-Asn (GPN)-loop; involved in dimer interface motif lies at 85–87; sequence GPN. Position 187 to 190 (187 to 190) interacts with GTP; that stretch reads SKMD.

It belongs to the GPN-loop GTPase family. Heterodimers with gpn1 or gpn3. Binds to RNA polymerase II (RNAPII).

Small GTPase required for proper localization of RNA polymerase II and III (RNAPII and RNAPIII). May act at an RNAP assembly step prior to nuclear import. The polypeptide is GPN-loop GTPase 2 (Xenopus laevis (African clawed frog)).